We begin with the raw amino-acid sequence, 806 residues long: Ankyrin repeat, bromo and BTB domain-containing protein DDB_G0293800 (806 aa).

5 ANK repeats span residues 1–30, 34–63, 67–96, 100–130, and 134–163; these read MSNK…DVNQ, SNRY…LVNC, RGAT…DVNC, AGST…DVNL, and EGST…RADV. Basic and acidic residues predominate over residues 210 to 228; sequence GVGKKEDDDNNMKIDKQES. Residues 210-231 form a disordered region; that stretch reads GVGKKEDDDNNMKIDKQESEQQ. The 69-residue stretch at 239–307 folds into the BTB domain; the sequence is SDITFLIENQ…IYTGSIEKFE (69 aa). Disordered regions lie at residues 423–517 and 621–743; these read TRTA…SDSM and QNFP…EERR. Low complexity-rich tracts occupy residues 426–436 and 443–511; these read ANANASNSNQS and TSTT…SSSS. Residues 516 to 622 enclose the Bromo domain; that stretch reads SMNEKNLTFC…NAFDQKFLQN (107 aa). Over residues 626-641 the composition is skewed to pro residues; sequence EKPPTYKPPPPTPTPI. Residues 642 to 658 show a composition bias toward low complexity; sequence PTQQQQQQSTSSTSTPT. Basic and acidic residues predominate over residues 666-675; that stretch reads DEHVKVKEDT. Polar residues predominate over residues 676 to 693; sequence NSAQPTSSSSNHTNGENA. A compositionally biased stretch (low complexity) spans 694–733; sequence SSSSSSSSSKQSNNNNNNNNNNNSNSTTNSSSSSSSTTTT. Positions 727 to 806 constitute an NET domain; it reads SSSTTTTQKK…ECFKKQKQDE (80 aa).

In Dictyostelium discoideum (Social amoeba), this protein is Ankyrin repeat, bromo and BTB domain-containing protein DDB_G0293800.